The primary structure comprises 196 residues: Glycerol-3-phosphate acyltransferase (196 aa).

A run of 4 helical transmembrane segments spans residues 4-24, 70-90, 111-131, and 152-172; these read IYIA…GLIL, VLIA…LGAF, IGVL…LWLA, and IFLW…LTLL.

Belongs to the PlsY family. In terms of assembly, probably interacts with PlsX.

It is found in the cell inner membrane. It catalyses the reaction an acyl phosphate + sn-glycerol 3-phosphate = a 1-acyl-sn-glycero-3-phosphate + phosphate. The protein operates within lipid metabolism; phospholipid metabolism. In terms of biological role, catalyzes the transfer of an acyl group from acyl-phosphate (acyl-PO(4)) to glycerol-3-phosphate (G3P) to form lysophosphatidic acid (LPA). This enzyme utilizes acyl-phosphate as fatty acyl donor, but not acyl-CoA or acyl-ACP. This chain is Glycerol-3-phosphate acyltransferase, found in Rhodopseudomonas palustris (strain BisB5).